Here is a 4684-residue protein sequence, read N- to C-terminus: Plectin (4684 aa).

Residues 1 to 1470 (MVAGMLMPRD…SELTTLTSQY (1470 aa)) are globular 1. Residues Phe-20 and Arg-21 each carry the phosphoserine modification. A Phosphotyrosine modification is found at Val-26. Gly-42 carries the post-translational modification Phosphoserine. Thr-113 carries the phosphothreonine modification. 2 positions are modified to phosphoserine: Ser-125 and Ser-149. Residues 144–179 (ELEEVSPETPVVPATTQRTLARPGPEPAPATDERDR) form a disordered region. The actin-binding stretch occupies residues 175 to 400 (DERDRVQKKT…YVSSLYDAMP (226 aa)). 2 Calponin-homology (CH) domains span residues 179–282 (RVQK…LHFQ) and 295–400 (MTAK…DAMP). The Spectrin 1 repeat unit spans residues 645–710 (LQSVQRRPEL…SIEEFRAKIE (66 aa)). Ser-720 carries the phosphoserine modification. 2 Spectrin repeats span residues 740–824 (KLLN…REDH) and 837–930 (LQTQ…AVVQ). The 58-residue stretch at 941–998 (RGRLPLLAVCDYKQVEVTVHKGDECQLVGPAQPSHWKVLSSSGSEAAVPSVCFLVPPP) folds into the SH3 domain. Residues 964–4574 (ECQLVGPAQP…VGAYSKYLTC (3611 aa)) form a required for interaction with intermediate filament proteins region. Ser-1047 is modified (phosphoserine). The Spectrin 4 repeat unit spans residues 1315–1415 (RERVAQLLER…QRFAKQYINA (101 aa)). Ser-1435 is modified (phosphoserine). Positions 1469 to 2756 (QYIKFISETL…AHSEEVTASQ (1288 aa)) form a coiled coil. The tract at residues 1471 to 2755 (IKFISETLRR…LAHSEEVTAS (1285 aa)) is central fibrous rod domain. The interval 1618-1650 (RAEEAEAQKRQAQEEAERLRRQVQDESQRKRQA) is disordered. Ser-1721 carries the post-translational modification Phosphoserine. The residue at position 1725 (Lys-1725) is an N6-acetyllysine. The residue at position 1732 (Ser-1732) is a Phosphoserine. Disordered stretches follow at residues 1794 to 1836 (LAQA…KQRQ), 2105 to 2139 (EAAR…EAAR), and 2217 to 2307 (RGEA…MEKH). Composition is skewed to basic and acidic residues over residues 1798 to 1836 (EAEK…KQRQ), 2105 to 2128 (EAAR…ERVQ), and 2217 to 2258 (RGEA…KQSA). Positions 2259–2272 (EEQAQARAQAQAAA) are enriched in low complexity. A compositionally biased stretch (basic and acidic residues) spans 2273–2288 (EKLRKEAEQEAARRAQ). Residue Ser-2631 is modified to Phosphoserine. Lys-2636 carries the post-translational modification N6-acetyllysine. 2 disordered regions span residues 2668–2707 (REEQ…RRKQ) and 2763–2784 (LPNG…HSFD). Positions 2679-2707 (EQERQRLVASMEEARRRQHEAEEGVRRKQ) are enriched in basic and acidic residues. A globular 2 region spans residues 2756–4684 (QVAATKTLPN…SLGGPESAVA (1929 aa)). Residues Ser-2782 and Ser-2802 each carry the phosphoserine modification. 5 Plectin repeats span residues 2826 to 2863 (RHYL…PGTA), 2864 to 2901 (LILL…PELH), 2902 to 2939 (HKLL…REHG), 2940 to 2977 (IRLL…EEMN), and 2981 to 3015 (ADPS…PETG). Residue Thr-2886 is modified to Phosphothreonine. At Tyr-3033 the chain carries Phosphotyrosine. The residue at position 3036 (Ser-3036) is a Phosphoserine. N6-acetyllysine occurs at positions 3053 and 3091. Plectin repeat units follow at residues 3116-3153 (SLVP…VDTV), 3154-3191 (RRAL…SDMA), 3192-3229 (VALL…PEFH), 3230-3267 (EKLL…REQG), 3268-3305 (LRLL…EETS), and 3306-3343 (RALS…QLTG). The disordered stretch occupies residues 3310 to 3331 (APRADAKAYSDPSTGEPATYGE). Residue Tyr-3362 is modified to Phosphotyrosine. Lys-3420 is subject to N6-acetyllysine. Plectin repeat units lie at residues 3485-3522 (RTLL…ATTA), 3523-3560 (ALLL…PELH), 3561-3598 (EQLL…RQHG), 3599-3636 (IRLL…EEMN), and 3640-3674 (ADPS…PETG). A Phosphoserine modification is found at Ser-3580. Thr-3785 is modified (phosphothreonine). 5 Plectin repeats span residues 3820-3857 (WCYL…AEVA), 3858-3895 (RLLL…PELH), 3896-3933 (DRLL…TEEA), 3934-3971 (LRLL…KDTH), and 3975-4008 (SEPS…DGTG). A required for interaction with type2 keratins, DES and VIM region spans residues 3956 to 4293 (PLEVAYQRGY…ETGKEMSVYE (338 aa)). Thr-4030 carries the phosphothreonine modification. Ser-4054 bears the Phosphoserine mark. Plectin repeat units follow at residues 4063–4100 (QKFL…PGTA), 4101–4138 (FELL…PEFK), 4139–4176 (DKLL…KDHG), 4177–4214 (IRLL…EEMN), 4218–4252 (TDPS…PQTG), 4265–4305 (RKTS…HQTY), and 4319–4356 (TISS…RSAL). The segment at 4250–4300 (QTGLCLLPLKEKKRERKTSSKSSVRKRRVVIVDPETGKEMSVYEAYRKGLI) is binding to intermediate filaments. Phosphoserine is present on residues Ser-4382, Ser-4384, Ser-4385, Ser-4386, Ser-4389, Ser-4390, Ser-4391, and Ser-4392. Tyr-4393 carries the post-translational modification Phosphotyrosine. Ser-4396, Ser-4400, and Ser-4406 each carry phosphoserine. Plectin repeat units lie at residues 4408 to 4445 (SDPT…NITG), 4446 to 4483 (QRLL…KIMV), 4484 to 4521 (DRIN…YEAG), 4522 to 4559 (QRFL…ARTA), and 4560 to 4597 (QKLR…EGTG). The residue at position 4411 (Thr-4411) is a Phosphothreonine. The segment at 4505–4574 (MSAAQALKKG…VGAYSKYLTC (70 aa)) is required for efficient interaction with KRT5 and KRT14 heterodimers. Thr-4539 is subject to Phosphothreonine; by CDK1. Phosphoserine is present on residues Ser-4607 and Ser-4613. Positions 4611–4678 (YYSPYSVSGS…ASGSSASLGG (68 aa)) are enriched in low complexity. The interval 4611–4684 (YYSPYSVSGS…SLGGPESAVA (74 aa)) is disordered. Residue Tyr-4615 is modified to Phosphotyrosine. Phosphoserine occurs at positions 4616, 4618, and 4622. The residue at position 4623 (Thr-4623) is a Phosphothreonine. The 4 X 4 AA tandem repeats of G-S-R-X stretch occupies residues 4625-4640 (GSRTGSRTGSRAGSRR). The residue at position 4626 (Ser-4626) is a Phosphoserine. An omega-N-methylarginine mark is found at Arg-4627 and Arg-4640. A phosphoserine mark is found at Ser-4642, Ser-4672, and Ser-4675.

This sequence belongs to the plakin or cytolinker family. Homodimer or homotetramer. Interacts (via actin-binding domain) with SYNE3. Interacts (via calponin-homology (CH) 1 domain) with VIM (via rod region). Interacts (via N-terminus) with DST isoform 2 (via N-terminus). Interacts with FER. Interacts with TOR1A. Interacts with ANK3. Identified in complexes that contain VIM, EZR, AHNAK, BFSP1, BFSP2, ANK2, PLEC, PRX and spectrin. Interacts with COL17A1. As to quaternary structure, interacts with KRT14, heterodimers consisting of KRT8 and KRT18, heterodimers consisting of KRT5 and KRT14, heterodimers consisting of KRT14 and KRT15, and heterodimers consisting of KRT1 and KRT10. Interacts with DES and VIM. Phosphorylated by CDK1; regulates dissociation from intermediate filaments during mitosis. In terms of tissue distribution, widely expressed with highest levels in muscle, heart, placenta and spinal cord.

The protein localises to the cytoplasm. It localises to the cytoskeleton. It is found in the cell junction. Its subcellular location is the hemidesmosome. The protein resides in the cell projection. The protein localises to the podosome. Functionally, interlinks intermediate filaments with microtubules and microfilaments and anchors intermediate filaments to desmosomes or hemidesmosomes. Could also bind muscle proteins such as actin to membrane complexes in muscle. May be involved not only in the filaments network, but also in the regulation of their dynamics. Structural component of muscle. Isoform 9 plays a major role in the maintenance of myofiber integrity. The sequence is that of Plectin (PLEC) from Homo sapiens (Human).